Consider the following 460-residue polypeptide: Polygalacturonase (460 aa).

A signal peptide spans 1–26 (MALKTQLLWSFVVVFVVSFSTTSCSG). The N-linked (GlcNAc...) asparagine glycan is linked to N280. Residue D292 is the Proton donor of the active site. The active site involves H315. A glycan (N-linked (GlcNAc...) asparagine) is linked at N421.

It belongs to the glycosyl hydrolase 28 family.

The protein resides in the secreted. The protein localises to the cell wall. The catalysed reaction is (1,4-alpha-D-galacturonosyl)n+m + H2O = (1,4-alpha-D-galacturonosyl)n + (1,4-alpha-D-galacturonosyl)m.. In terms of biological role, acts in concert with the pectinesterase, in the ripening process. Is involved in cell wall metabolism, specifically in polyuronide degradation. This chain is Polygalacturonase, found in Malus domestica (Apple).